The sequence spans 315 residues: Putative steroid dehydrogenase 2 (315 aa).

47–76 contributes to the NADP(+) binding site; that stretch reads ASWAVVTGATDGIGKSYSFELARRGFNVYI. The active site involves tyrosine 202.

This sequence belongs to the short-chain dehydrogenases/reductases (SDR) family. 17-beta-HSD 3 subfamily.

This is Putative steroid dehydrogenase 2 (stdh-2) from Caenorhabditis elegans.